A 653-amino-acid polypeptide reads, in one-letter code: Glyceraldehyde-3-phosphate:ferredoxin oxidoreductase (653 aa).

6 residues coordinate tungstopterin: Arg-70, Gly-89, Arg-196, Ala-197, Gly-199, and Arg-206. [4Fe-4S] cluster contacts are provided by Cys-333 and Cys-337. Tungstopterin contacts are provided by Asp-378, Asp-383, and Asp-544. Cys-549 serves as a coordination point for [4Fe-4S] cluster.

This sequence belongs to the AOR/FOR family. Monomer. [4Fe-4S] cluster is required as a cofactor. Requires tungstopterin as cofactor.

The enzyme catalyses D-glyceraldehyde 3-phosphate + 2 oxidized [2Fe-2S]-[ferredoxin] + H2O = (2R)-3-phosphoglycerate + 2 reduced [2Fe-2S]-[ferredoxin] + 3 H(+). Its activity is regulated as follows. Sensitive to oxygen. Activity increased by 58%-93% in the presence of acetyl phosphate, 3-phosphoglycerate or 2,3-bisphosphoglycerate at 10 mM concentration. Inhibited by up to 25% in the presence of crotonaldehyde or formaldehyde at 10 mM concentration. Inhibited by up to 50% by sodium dithionate. 3.5-fold increase in activity observed by addition of potassium phosphate or sodium arsenate at 200 mM concentration. Activity enhanced by potassium chloride, sodium citrate or sodium sulfate at 200 mM concentration. Catalyzes the oxidation of glyceraldehyde-3-phosphate to 3-phosphoglycerate. Uses ferredoxin as electron acceptor. In vitro can also use benzyl viologen, but not NADP or NAD, as electron acceptor. Probably acts as a glycolytic enzyme in place of glyceraldehyde-3-phosphate dehydrogenase (GAPDH) and phosphoglycerate kinase (PGK) in an unusual Emden-Meyerhof glycolysis. In Pyrococcus furiosus (strain ATCC 43587 / DSM 3638 / JCM 8422 / Vc1), this protein is Glyceraldehyde-3-phosphate:ferredoxin oxidoreductase.